Here is a 59-residue protein sequence, read N- to C-terminus: Cecropin-C type 1 (59 aa).

Positions 1–23 (MNFTKIFVLIAMAALLLVGQSEA) are cleaved as a signal peptide.

It localises to the secreted. Cecropins have lytic and antibacterial activity against several Gram-positive and Gram-negative bacteria. The sequence is that of Cecropin-C type 1 (CECC1) from Aedes albopictus (Asian tiger mosquito).